We begin with the raw amino-acid sequence, 465 residues long: Trigger factor (465 aa).

In terms of domain architecture, PPIase FKBP-type spans 163–248 (GDVINFNFKG…INKIKENQPA (86 aa)). The disordered stretch occupies residues 431 to 465 (EIVNKNQNDNEIEQDKEQKDNNEEKIKQENNLENK). Residues 443–465 (EQDKEQKDNNEEKIKQENNLENK) are compositionally biased toward basic and acidic residues.

It belongs to the FKBP-type PPIase family. Tig subfamily.

The protein resides in the cytoplasm. The enzyme catalyses [protein]-peptidylproline (omega=180) = [protein]-peptidylproline (omega=0). Functionally, involved in protein export. Acts as a chaperone by maintaining the newly synthesized protein in an open conformation. Functions as a peptidyl-prolyl cis-trans isomerase. The protein is Trigger factor of Mesomycoplasma hyopneumoniae (strain J / ATCC 25934 / NCTC 10110) (Mycoplasma hyopneumoniae).